We begin with the raw amino-acid sequence, 527 residues long: Probable feruloyl esterase B (527 aa).

The first 19 residues, M1 to S19, serve as a signal peptide directing secretion. 2 cysteine pairs are disulfide-bonded: C31–C76 and C65–C115. Residues N56, N86, and N139 are each glycosylated (N-linked (GlcNAc...) asparagine). Intrachain disulfides connect C188–C442, C257–C274, C283–C292, and C504–C526. Catalysis depends on S189, which acts as the Acyl-ester intermediate. Ca(2+) contacts are provided by D258, D261, A263, D265, and I267. The N-linked (GlcNAc...) asparagine glycan is linked to N277. N312 and N356 each carry an N-linked (GlcNAc...) asparagine glycan. Catalysis depends on charge relay system residues D401 and H441.

It belongs to the tannase family.

The protein resides in the secreted. The catalysed reaction is feruloyl-polysaccharide + H2O = ferulate + polysaccharide.. Involved in degradation of plant cell walls. Hydrolyzes the feruloyl-arabinose ester bond in arabinoxylans as well as the feruloyl-galactose and feruloyl-arabinose ester bonds in pectin. This Emericella nidulans (strain FGSC A4 / ATCC 38163 / CBS 112.46 / NRRL 194 / M139) (Aspergillus nidulans) protein is Probable feruloyl esterase B (faeB).